The following is a 442-amino-acid chain: 3-ketoacyl-CoA thiolase (442 aa).

C105 acts as the Acyl-thioester intermediate in catalysis. Catalysis depends on proton acceptor residues H398 and C428.

It belongs to the thiolase-like superfamily. Thiolase family. Heterotetramer of two alpha chains (FadJ) and two beta chains (FadI).

The protein localises to the cytoplasm. The catalysed reaction is an acyl-CoA + acetyl-CoA = a 3-oxoacyl-CoA + CoA. Its pathway is lipid metabolism; fatty acid beta-oxidation. In terms of biological role, catalyzes the final step of fatty acid oxidation in which acetyl-CoA is released and the CoA ester of a fatty acid two carbons shorter is formed. This Aliivibrio fischeri (strain ATCC 700601 / ES114) (Vibrio fischeri) protein is 3-ketoacyl-CoA thiolase.